The following is a 301-amino-acid chain: MPGISSPILTNAQGQVIGALPWVVNSASVATPAPAQSLQVQAVTPQLLLNAQGQVIATLASSPLPQPVAVRKPSTPESPAKSEVQPIQPTQAVPPPAVILTSPAPALKPSASAPIPITCSETPTVSQLVSKPHTPSLDEDGINLEEIREFAKNFKIRRLSLGLTQTQVGQALTATEGPAYSQSAICRFEKLDITPKSAQKLKPVLEKWLNEAELRNQEGQQNLMEFVGGEPSKKRKRRTSFTPQAIEALNAYFEKNPLPTGQEITEIAKELNYDREVVRVWFCNRRQTLKNTSKLNVFQIP.

2 tandem repeats follow at residues 11–17 and 50–56. Residues 11 to 56 form a 2 X 7 AA repeats of N-A-Q-G-Q-V-I region; it reads NAQGQVIGALPWVVNSASVATPAPAQSLQVQAVTPQLLLNAQGQVI. The segment at 66-88 is disordered; the sequence is QPVAVRKPSTPESPAKSEVQPIQ. The region spanning 139–213 is the POU-specific domain; it reads EDGINLEEIR…VLEKWLNEAE (75 aa). The segment at residues 234–293 is a DNA-binding region (homeobox); the sequence is KRKRRTSFTPQAIEALNAYFEKNPLPTGQEITEIAKELNYDREVVRVWFCNRRQTLKNTS.

It belongs to the POU transcription factor family. Class-6 subfamily. In terms of tissue distribution, in the embryo, widely expressed, with highest levels in the developing brain and spinal cord. In the adult, mostly found in the brain, where it is diffusely expressed with the exception of an enrichment in layer IV of the neocortex. Also found in kidney, lung, heart, adrenal, skin, and placenta. Low levels in spleen, muscle, liver, anterior pituitary, testis and ovary.

The protein resides in the nucleus. Its function is as follows. Transcription factor that binds preferentially to a variant of the octamer motif (5'-ATGATAAT-3'). The protein is POU domain, class 6, transcription factor 1 (Pou6f1) of Rattus norvegicus (Rat).